A 203-amino-acid chain; its full sequence is Recombination protein RecR (203 aa).

The C4-type zinc-finger motif lies at 56 to 71 (CEVCGNVSDADRCRIC). A Toprim domain is found at 79–179 (SLVCVVEEPK…TVTRIASGLP (101 aa)).

This sequence belongs to the RecR family.

In terms of biological role, may play a role in DNA repair. It seems to be involved in an RecBC-independent recombinational process of DNA repair. It may act with RecF and RecO. The chain is Recombination protein RecR from Mycobacterium sp. (strain JLS).